The chain runs to 131 residues: Large ribosomal subunit protein bL19 (131 aa).

It belongs to the bacterial ribosomal protein bL19 family.

This protein is located at the 30S-50S ribosomal subunit interface and may play a role in the structure and function of the aminoacyl-tRNA binding site. The polypeptide is Large ribosomal subunit protein bL19 (Synechococcus sp. (strain CC9902)).